Reading from the N-terminus, the 327-residue chain is GMP reductase (327 aa).

Cys175 functions as the Thioimidate intermediate in the catalytic mechanism. Residue 204–227 coordinates NADP(+); that stretch reads IIADGGIRTNGDVAKSIRFGATMV.

Belongs to the IMPDH/GMPR family. GuaC type 2 subfamily.

The catalysed reaction is IMP + NH4(+) + NADP(+) = GMP + NADPH + 2 H(+). Catalyzes the irreversible NADPH-dependent deamination of GMP to IMP. It functions in the conversion of nucleobase, nucleoside and nucleotide derivatives of G to A nucleotides, and in maintaining the intracellular balance of A and G nucleotides. This is GMP reductase from Bacillus cereus (strain ZK / E33L).